The sequence spans 88 residues: Kunitz-type U15-theraphotoxin-Hhn1p (88 aa).

Residues 1–27 (MGIARILSAVLFLSVLFVVTFPTLLSA) form the signal peptide. The propeptide occupies 28–33 (DHHDGR). Residues 37–85 (CRLPSDRGRCKASFERWYFNGTTCTKFVYGGYGGNDNRFPTEKACMKRC) form the BPTI/Kunitz inhibitor domain. 2 disulfides stabilise this stretch: Cys-37–Cys-85 and Cys-60–Cys-81.

Belongs to the venom Kunitz-type family. 01 (intermediate) subfamily. In terms of tissue distribution, expressed by the venom gland.

The protein resides in the secreted. Its function is as follows. Serine protease inhibitor that inhibits trypsin at a molar ratio of 1:1. The polypeptide is Kunitz-type U15-theraphotoxin-Hhn1p (Cyriopagopus hainanus (Chinese bird spider)).